We begin with the raw amino-acid sequence, 537 residues long: Phosphoenolpyruvate carboxykinase (ATP) (537 aa).

Substrate-binding residues include R61, Y195, and K201. ATP contacts are provided by residues K201, H220, and 236-244 (GLSGTGKTT). Residues K201 and H220 each contribute to the Mn(2+) site. Position 257 (D257) interacts with Mn(2+). ATP-binding residues include E285, R323, and T448. R323 contributes to the substrate binding site.

The protein belongs to the phosphoenolpyruvate carboxykinase (ATP) family. It depends on Mn(2+) as a cofactor.

The protein localises to the cytoplasm. It catalyses the reaction oxaloacetate + ATP = phosphoenolpyruvate + ADP + CO2. Its pathway is carbohydrate biosynthesis; gluconeogenesis. Functionally, involved in the gluconeogenesis. Catalyzes the conversion of oxaloacetate (OAA) to phosphoenolpyruvate (PEP) through direct phosphoryl transfer between the nucleoside triphosphate and OAA. This chain is Phosphoenolpyruvate carboxykinase (ATP), found in Rhodopseudomonas palustris (strain TIE-1).